Reading from the N-terminus, the 245-residue chain is 4-hydroxy-tetrahydrodipicolinate reductase (245 aa).

Residues 8–13, 78–80, and 102–105 each bind NAD(+); these read GSTGKM, GTT, and SANM. The active-site Proton donor/acceptor is histidine 134. Histidine 135 is a (S)-2,3,4,5-tetrahydrodipicolinate binding site. Lysine 138 (proton donor) is an active-site residue. Residue 144-145 coordinates (S)-2,3,4,5-tetrahydrodipicolinate; the sequence is GT.

It belongs to the DapB family.

The protein resides in the cytoplasm. It catalyses the reaction (S)-2,3,4,5-tetrahydrodipicolinate + NAD(+) + H2O = (2S,4S)-4-hydroxy-2,3,4,5-tetrahydrodipicolinate + NADH + H(+). It carries out the reaction (S)-2,3,4,5-tetrahydrodipicolinate + NADP(+) + H2O = (2S,4S)-4-hydroxy-2,3,4,5-tetrahydrodipicolinate + NADPH + H(+). It participates in amino-acid biosynthesis; L-lysine biosynthesis via DAP pathway; (S)-tetrahydrodipicolinate from L-aspartate: step 4/4. Its function is as follows. Catalyzes the conversion of 4-hydroxy-tetrahydrodipicolinate (HTPA) to tetrahydrodipicolinate. This is 4-hydroxy-tetrahydrodipicolinate reductase from Rickettsia akari (strain Hartford).